Reading from the N-terminus, the 718-residue chain is Serine/threonine-protein kinase tousled-like 2 (718 aa).

The tract at residues 24–85 is disordered; the sequence is GVSKGPLNSE…KGTPRGHKIS (62 aa). Polar residues predominate over residues 29–44; that stretch reads PLNSESSNQSLCSVGS. Residues 46–61 are compositionally biased toward basic and acidic residues; that stretch reads SDKEVETPEKKQNDQR. Ser-73, Gln-94, Leu-99, and Ser-102 each carry phosphoserine. The segment at 147 to 176 is disordered; it reads QQNSPSSTGSGNTEHSCSSQKQISIQHRQT. The tract at residues 193 to 244 is required for interaction with TLK1 and DYNLL1/LC8; that stretch reads NSDLEKKEGRIDDLLRANCDLRRQIDEQQKMLEKYKERLNRCVTMSKKLLIE. Coiled coils occupy residues 193 to 244, 285 to 315, and 349 to 397; these read NSDL…LLIE, AFQN…KRKP, and HEQE…DNSQ. The tract at residues 310 to 337 is disordered; the sequence is LAKRKPPAMGQAPPATNEQKQRKSKTNG. In terms of domain architecture, Protein kinase spans 408-687; that stretch reads YLLLHLLGRG…VQQLACDPYL (280 aa). ATP contacts are provided by residues 414–422 and Lys-437; that span reads LGRGGFSEV. Asp-538 (proton acceptor) is an active-site residue. Phosphoserine; by CHEK1 is present on Ser-696.

Belongs to the protein kinase superfamily. Ser/Thr protein kinase family. In terms of assembly, monomer. May form homodimers; homodimerization may enhance autophosphoylation and enzymatic activity. Heterodimer with TLK1. Interacts with YWHAZ; association with 14-3-3 proteins such as YWHAZ regulates subcellular location. May also interact with FEZ1/LZTS1 and FEZ2. Interacts with CHD7 and CHD8. Interacts with DYNLL1/LC8. The cofactor is Mg(2+). Post-translationally, phosphorylated at Ser-696, probably by CHEK1. In terms of processing, autophosphorylated; phosphorylation promotes the assembly of higher order oligomers and enzymatic activity. Ubiquitously expressed in all tissues examined, with high levels in heart and testis, in particular the pachytene spermatocytes and in round spermatids. Some evidence for the existence of a testis-specific isoform suggesting a role in spermatogenesis.

It is found in the nucleus. Its subcellular location is the nucleoplasm. The protein resides in the cytoplasm. It localises to the perinuclear region. The protein localises to the cytoskeleton. The catalysed reaction is L-seryl-[protein] + ATP = O-phospho-L-seryl-[protein] + ADP + H(+). It carries out the reaction L-threonyl-[protein] + ATP = O-phospho-L-threonyl-[protein] + ADP + H(+). With respect to regulation, cell cycle-regulated, with maximal activity in the S-phase. Rapidly and transiently inhibited by phosphorylation following the generation of DNA double-stranded breaks during S-phase, probably by CHEK1, possibly at Ser-696. This inhibition is cell cycle checkpoint- and ATM-dependent. Serine/threonine-protein kinase involved in the process of chromatin assembly and probably also DNA replication, transcription, repair, and chromosome segregation. Phosphorylates the chromatin assembly factors ASF1A and ASF1B. Phosphorylation of ASF1A prevents its proteasome-mediated degradation, thereby enhancing chromatin assembly. Negative regulator of amino acid starvation-induced autophagy. Functionally, testis-specific isoforms may play a role in spermatogenesis. Highly expressed in embryos throughout development. This Mus musculus (Mouse) protein is Serine/threonine-protein kinase tousled-like 2 (Tlk2).